The sequence spans 53 residues: UPF0391 membrane protein gsr2640 (53 aa).

Transmembrane regions (helical) follow at residues 4-24 and 32-49; these read LLWL…GGVV and WFLI…FVTG.

This sequence belongs to the UPF0391 family.

It is found in the cell membrane. This Gloeobacter violaceus (strain ATCC 29082 / PCC 7421) protein is UPF0391 membrane protein gsr2640.